Here is a 105-residue protein sequence, read N- to C-terminus: N(4)-acetylcytidine amidohydrolase (105 aa).

The 87-residue stretch at 7–93 (TFFERFEHDI…VIAEIYPGLE (87 aa)) folds into the ASCH domain. The active-site Proton acceptor is the Lys21. Residue Thr24 is the Nucleophile of the active site. Glu74 (proton donor) is an active-site residue.

Belongs to the N(4)-acetylcytidine amidohydrolase family.

The catalysed reaction is N(4)-acetylcytidine + H2O = cytidine + acetate + H(+). It catalyses the reaction N(4)-acetyl-2'-deoxycytidine + H2O = 2'-deoxycytidine + acetate + H(+). It carries out the reaction N(4)-acetylcytosine + H2O = cytosine + acetate + H(+). Its function is as follows. Catalyzes the hydrolysis of N(4)-acetylcytidine (ac4C). The protein is N(4)-acetylcytidine amidohydrolase of Shewanella baltica (strain OS195).